A 269-amino-acid polypeptide reads, in one-letter code: UPF0761 membrane protein HI_0276 (269 aa).

6 helical membrane passes run 32–52 (MLAM…FPVF), 89–109 (MSAV…NNID), 128–148 (FAIY…SIGI), 168–188 (LLSF…YTVV), 203–223 (FLAA…IVTF), and 232–252 (AMAT…VVLV).

This sequence belongs to the UPF0761 family.

The protein resides in the cell inner membrane. The polypeptide is UPF0761 membrane protein HI_0276 (Haemophilus influenzae (strain ATCC 51907 / DSM 11121 / KW20 / Rd)).